Reading from the N-terminus, the 99-residue chain is Large ribosomal subunit protein uL23 (99 aa).

It belongs to the universal ribosomal protein uL23 family. In terms of assembly, part of the 50S ribosomal subunit. Contacts protein L29, and trigger factor when it is bound to the ribosome.

In terms of biological role, one of the early assembly proteins it binds 23S rRNA. One of the proteins that surrounds the polypeptide exit tunnel on the outside of the ribosome. Forms the main docking site for trigger factor binding to the ribosome. This chain is Large ribosomal subunit protein uL23, found in Agathobacter rectalis (strain ATCC 33656 / DSM 3377 / JCM 17463 / KCTC 5835 / VPI 0990) (Eubacterium rectale).